Consider the following 191-residue polypeptide: Large ribosomal subunit protein uL29m (191 aa).

It belongs to the universal ribosomal protein uL29 family. As to quaternary structure, component of the mitochondrial large ribosomal subunit. Mature mitochondrial ribosomes consist of a small (37S) and a large (54S) subunit. The 37S subunit contains at least 33 different proteins and 1 molecule of RNA (15S). The 54S subunit contains at least 45 different proteins and 1 molecule of RNA (21S).

The protein localises to the mitochondrion. The chain is Large ribosomal subunit protein uL29m (MRPL4) from Sclerotinia sclerotiorum (strain ATCC 18683 / 1980 / Ss-1) (White mold).